The primary structure comprises 272 residues: uncharacterized protein (272 aa).

Lys185 (schiff-base intermediate with substrate) is an active-site residue.

It belongs to the DeoC/FbaB aldolase family.

This is an uncharacterized protein from Saccharolobus solfataricus (strain ATCC 35092 / DSM 1617 / JCM 11322 / P2) (Sulfolobus solfataricus).